A 348-amino-acid chain; its full sequence is UDP-glucose 4-epimerase (348 aa).

Residues 12–14 (GYI), 33–37 (DNFHN), 66–67 (DI), phenylalanine 88, and lysine 92 each bind NAD(+). Residue 132–134 (SAT) participates in substrate binding. Residue tyrosine 157 is the Proton acceptor of the active site. NAD(+)-binding residues include lysine 161 and tyrosine 185. Residues 185-187 (YFN), 206-208 (NNL), 224-226 (NVF), arginine 239, and 300-303 (REGD) each bind substrate.

This sequence belongs to the NAD(P)-dependent epimerase/dehydratase family. As to quaternary structure, homodimer. NAD(+) serves as cofactor.

It carries out the reaction UDP-alpha-D-glucose = UDP-alpha-D-galactose. It catalyses the reaction UDP-N-acetyl-alpha-D-glucosamine = UDP-N-acetyl-alpha-D-galactosamine. It participates in carbohydrate metabolism; galactose metabolism. Its function is as follows. Catalyzes two distinct but analogous reactions: the reversible epimerization of UDP-glucose to UDP-galactose and the reversible epimerization of UDP-N-acetylglucosamine to UDP-N-acetylgalactosamine. The reaction with UDP-Gal plays a critical role in the Leloir pathway of galactose catabolism in which galactose is converted to the glycolytic intermediate glucose 6-phosphate. It contributes to the catabolism of dietary galactose and enables the endogenous biosynthesis of both UDP-Gal and UDP-GalNAc when exogenous sources are limited. Both UDP-sugar interconversions are important in the synthesis of glycoproteins and glycolipids. The polypeptide is UDP-glucose 4-epimerase (GALE) (Pongo abelii (Sumatran orangutan)).